The chain runs to 313 residues: tRNA dimethylallyltransferase (313 aa).

Residue Gly-8 to Ser-15 coordinates ATP. Thr-10–Ser-15 lines the substrate pocket.

The protein belongs to the IPP transferase family. In terms of assembly, monomer. Mg(2+) is required as a cofactor.

It carries out the reaction adenosine(37) in tRNA + dimethylallyl diphosphate = N(6)-dimethylallyladenosine(37) in tRNA + diphosphate. Catalyzes the transfer of a dimethylallyl group onto the adenine at position 37 in tRNAs that read codons beginning with uridine, leading to the formation of N6-(dimethylallyl)adenosine (i(6)A). This Mycolicibacterium gilvum (strain PYR-GCK) (Mycobacterium gilvum (strain PYR-GCK)) protein is tRNA dimethylallyltransferase.